A 469-amino-acid polypeptide reads, in one-letter code: Sulfate adenylyltransferase subunit 1 (469 aa).

A tr-type G domain is found at Lys-22–Asp-236. The segment at Gly-31–Ser-38 is G1. Gly-31 to Ser-38 is a binding site for GTP. Residues Gly-89–Asp-93 are G2. Residues Asp-110–Gly-113 are G3. Residues Asp-110–His-114 and Asn-165–Asp-168 contribute to the GTP site. The tract at residues Asn-165–Asp-168 is G4. The segment at Ser-202–Leu-204 is G5.

This sequence belongs to the TRAFAC class translation factor GTPase superfamily. Classic translation factor GTPase family. CysN/NodQ subfamily. As to quaternary structure, heterodimer composed of CysD, the smaller subunit, and CysN.

It catalyses the reaction sulfate + ATP + H(+) = adenosine 5'-phosphosulfate + diphosphate. Its pathway is sulfur metabolism; hydrogen sulfide biosynthesis; sulfite from sulfate: step 1/3. Its function is as follows. With CysD forms the ATP sulfurylase (ATPS) that catalyzes the adenylation of sulfate producing adenosine 5'-phosphosulfate (APS) and diphosphate, the first enzymatic step in sulfur assimilation pathway. APS synthesis involves the formation of a high-energy phosphoric-sulfuric acid anhydride bond driven by GTP hydrolysis by CysN coupled to ATP hydrolysis by CysD. The protein is Sulfate adenylyltransferase subunit 1 of Pseudoalteromonas atlantica (strain T6c / ATCC BAA-1087).